The chain runs to 484 residues: Trigger factor (484 aa).

Residues 162-243 (GDFISIDLSA…VKSVKERELP (82 aa)) form the PPIase FKBP-type domain. Residues 427 to 484 (DGNTIDTSEFFGKPPENDVTDLLDDDADGDAGVDADGDTENSAEPADADSADTAQGAG) form a disordered region. Over residues 444–476 (DVTDLLDDDADGDAGVDADGDTENSAEPADADS) the composition is skewed to acidic residues.

The protein belongs to the FKBP-type PPIase family. Tig subfamily.

The protein localises to the cytoplasm. It catalyses the reaction [protein]-peptidylproline (omega=180) = [protein]-peptidylproline (omega=0). In terms of biological role, involved in protein export. Acts as a chaperone by maintaining the newly synthesized protein in an open conformation. Functions as a peptidyl-prolyl cis-trans isomerase. The polypeptide is Trigger factor (Mycobacterium ulcerans (strain Agy99)).